We begin with the raw amino-acid sequence, 286 residues long: P2R1A-PPP2R2A-interacting phosphatase regulator 1 (286 aa).

A disordered region spans residues 1-46 (MAQEKMELDLELPAGTGASPAEGGGPGSGGLRRSNSAPLIHGLSDS). The residue at position 34 (Ser-34) is a Phosphoserine. Ser-36 is modified (phosphoserine; by CHEK1). Phosphoserine occurs at positions 44, 47, 61, and 75. Lys-88 participates in a covalent cross-link: Glycyl lysine isopeptide (Lys-Gly) (interchain with G-Cter in SUMO1). A phosphoserine mark is found at Ser-142 and Ser-146. A Phosphothreonine modification is found at Thr-148. Residues 166-187 (SNGLPPSPIPSPTTRFTTRRSQ) form a disordered region. Low complexity predominate over residues 177 to 187 (PTTRFTTRRSQ). Ser-186 and Ser-188 each carry phosphoserine. The tract at residues 238–286 (VSSDTLDGNSSSAGSSCNSPAKVSTTTDSPVSPAQAASPFIPVDELSSK) is disordered. Residues 245-256 (GNSSSAGSSCNS) show a composition bias toward low complexity. Residues 258 to 269 (AKVSTTTDSPVS) show a composition bias toward polar residues. Ser-266, Ser-269, and Ser-275 each carry phosphoserine.

This sequence belongs to the FAM122 family. Interacts with PPP2CA and PPP2R1A. Interacts (via its N-terminus) with PPP2R2A; the interaction is direct and this interaction inhibits PP2A activity. The CHEK1-mediated Ser-36 phosphorylated form interacts with 14-3-3 proteins. CHEK1-mediated phosphorylation at Ser-36 negatively regulates its ability to inhibit serine/threonine-protein phosphatase 2A (PP2A) activity. Phosphorylation leads to its release from the PP2A complex and its sequestration by 14-3-3 proteins in the cytoplasm resulting in its inability to translocate to the nucleus, where it otherwise inhibits PP2A.

The protein localises to the nucleus. The protein resides in the cytoplasm. Acts as an inhibitor of serine/threonine-protein phosphatase 2A (PP2A) activity. Inhibits PP2A activity by blocking the substrate binding site on PPP2R2A and the active site of PPP2CA. Potentiates ubiquitin-mediated proteasomal degradation of serine/threonine-protein phosphatase 2A catalytic subunit alpha (PPP2CA). Inhibits PP2A-mediated dephosphorylation of WEE1, promoting ubiquitin-mediated proteolysis of WEE1, thereby releasing G2/M checkpoint. In Rattus norvegicus (Rat), this protein is P2R1A-PPP2R2A-interacting phosphatase regulator 1.